The following is a 276-amino-acid chain: ATP synthase subunit a (276 aa).

Transmembrane regions (helical) follow at residues 47 to 67 (WHID…WLFY), 107 to 127 (IAPL…MDLI), 152 to 172 (DLNV…FYSI), 188 to 208 (PFNH…TLIA), 226 to 246 (LIFI…SVPW), and 247 to 267 (AIFH…LTIV).

The protein belongs to the ATPase A chain family. In terms of assembly, F-type ATPases have 2 components, CF(1) - the catalytic core - and CF(0) - the membrane proton channel. CF(1) has five subunits: alpha(3), beta(3), gamma(1), delta(1), epsilon(1). CF(0) has three main subunits: a(1), b(2) and c(9-12). The alpha and beta chains form an alternating ring which encloses part of the gamma chain. CF(1) is attached to CF(0) by a central stalk formed by the gamma and epsilon chains, while a peripheral stalk is formed by the delta and b chains.

It is found in the cell inner membrane. Its function is as follows. Key component of the proton channel; it plays a direct role in the translocation of protons across the membrane. The protein is ATP synthase subunit a of Shewanella halifaxensis (strain HAW-EB4).